The sequence spans 408 residues: Repulsive guidance molecule B homolog drag-1 (408 aa).

An N-terminal signal peptide occupies residues 1 to 22 (MSIVYLVSITFIFSVFKPITSC). The Extracellular portion of the chain corresponds to 23–387 (RVEECAAWFQ…SEIFKKCIPS (365 aa)). 4 N-linked (GlcNAc...) asparagine glycosylation sites follow: Asn60, Asn134, Asn183, and Asn376. Residues 388–408 (KSIRFYPFLAIFFFALLSLLC) form a helical membrane-spanning segment.

It belongs to the repulsive guidance molecule (RGM) family. As to quaternary structure, interacts with unc-40 (via FN6 domain), dbl-1 and sma-6. In terms of tissue distribution, expressed in pharyngeal, hypodermal and intestinal cells.

The protein resides in the cell membrane. Functionally, probably in association with the cell surface receptor unc-40, positively modulates the BMP-like Sma/Mab signaling pathway through interaction with both the ligand dbl-1 and its type I receptor sma-6. Regulates body size and this may be through modulation of the Sma/Mab signaling pathway. In Caenorhabditis elegans, this protein is Repulsive guidance molecule B homolog drag-1.